Consider the following 321-residue polypeptide: MKALARLIVGLLILDAAVTAPTLESINYNSETYDATLEDLDHLYNYENIPMGRAEIEIATVMPSGNRELLTPPPQPEEAEEEEEEESTPRLIDGSSPQEPEFTGVLGPQTNEDFPTCLLCTCISTTVYCDDHELDAIPPLPKNTAYFYSRFNRIKKINKNDFASLNDLRRIDLTSNLISEIDEDAFRKLPQLRELVLRDNKIRQLPELPTTLRFIDISNNRLGRKGIKQEAFKDMYDLHHLYLTDNNLDHIPLPLPENLRALHLQNNNIMEMHEDTFCNVKNLTYIRKALEDIRLDGNPINLSKTPQAYMCLPRLPIGSLV.

A signal peptide spans 1–19 (MKALARLIVGLLILDAAVT). O-linked (GalNAc...) threonine glycosylation occurs at Thr60. O-linked (Xyl...) (dermatan sulfate) serine glycosylation occurs at Ser64. The disordered stretch occupies residues 64 to 100 (SGNRELLTPPPQPEEAEEEEEEESTPRLIDGSSPQEP). Acidic residues predominate over residues 77–86 (EEAEEEEEEE). Ser95 is a glycosylation site (O-linked (GalNAc...) serine). Positions 105–142 (VLGPQTNEDFPTCLLCTCISTTVYCDDHELDAIPPLPK) constitute an LRRNT domain. The cysteines at positions 117 and 129 are disulfide-linked. LRR repeat units follow at residues 143–164 (NTAY…DFAS), 167–188 (DLRR…AFRK), 191–212 (QLRE…PTTL), 237–257 (DLHH…PLPE), and 258–279 (NLRA…TFCN). Cys278 and Cys311 are disulfide-bonded. The N-linked (GlcNAc...) asparagine glycan is linked to Asn282. One copy of the LRR 6 repeat lies at 289–309 (ALEDIRLDGNPINLSKTPQAY).

The protein belongs to the small leucine-rich proteoglycan (SLRP) family. SLRP class III subfamily. Post-translationally, a long and a short form present in approximately equimolar amounts may arise by proteolysis or cleavage by exopeptidases. In terms of processing, the O-linked polysaccharides on Thr-60 and Ser-95 are probably the mucin type linked to GalNAc. There is one glycosaminoglycan chain, known to be dermatan sulfate, and it is probably the O-glycosylation at Ser-64. In terms of tissue distribution, preferentially expressed in the zone of flattened chondrocytes of the developing limb cartilage.

It is found in the secreted. It localises to the extracellular space. The protein localises to the extracellular matrix. Its function is as follows. May have a role in bone formation and also in establishing the ordered structure of cartilage through matrix organization. This Bos taurus (Bovine) protein is Epiphycan (EPYC).